The chain runs to 230 residues: Small ribosomal subunit protein uS3 (230 aa).

The region spanning 43-95 (VNRVIIYSARPKMISEERKAHLAKLLELKFGLEKPVIEVLPIENPNLDAHVIA) is the KH type-2 domain.

Belongs to the universal ribosomal protein uS3 family. As to quaternary structure, part of the 30S ribosomal subunit.

In terms of biological role, binds the lower part of the 30S subunit head. This chain is Small ribosomal subunit protein uS3, found in Nanoarchaeum equitans (strain Kin4-M).